The primary structure comprises 141 residues: Large ribosomal subunit protein uL22c (141 aa).

Belongs to the universal ribosomal protein uL22 family. In terms of assembly, part of the 50S ribosomal subunit.

It localises to the plastid. Its subcellular location is the chloroplast. In terms of biological role, this protein binds specifically to 23S rRNA. Its function is as follows. The globular domain of the protein is located near the polypeptide exit tunnel on the outside of the subunit, while an extended beta-hairpin is found that lines the wall of the exit tunnel in the center of the 70S ribosome. The chain is Large ribosomal subunit protein uL22c (rpl22) from Chloranthus spicatus (Chulantree).